We begin with the raw amino-acid sequence, 162 residues long: NADH-ubiquinone oxidoreductase 24 kDa subunit homolog C11E3.12, mitochondrial (162 aa).

The [2Fe-2S] cluster site is built by Cys-88, Cys-93, Cys-125, and Cys-129.

It belongs to the complex I 24 kDa subunit family. The cofactor is [2Fe-2S] cluster.

It is found in the mitochondrion. In Schizosaccharomyces pombe (strain 972 / ATCC 24843) (Fission yeast), this protein is NADH-ubiquinone oxidoreductase 24 kDa subunit homolog C11E3.12, mitochondrial.